Consider the following 227-residue polypeptide: Paired immunoglobulin-like type 2 receptor beta (227 aa).

Positions 1 to 19 (MGRPLLLPLLLLLQPPAFL) are cleaved as a signal peptide. Topologically, residues 20 to 191 (QPGGSTGSGP…WHLSLDTAIR (172 aa)) are extracellular. Residues 21–143 (PGGSTGSGPS…SGRQQLQSIK (123 aa)) enclose the Ig-like V-type domain. Asn-100 is a glycosylation site (N-linked (GlcNAc...) asparagine). The chain crosses the membrane as a helical span at residues 192-212 (VALAVAVLKTVILGLLCLLLL). The Cytoplasmic portion of the chain corresponds to 213-227 (WWRRRKGSRAPSSDF).

The protein localises to the membrane. Functionally, paired receptors consist of highly related activating and inhibitory receptors and are widely involved in the regulation of the immune system. PILRB is thought to act as a cellular signaling activating receptor that associates with ITAM-bearing adapter molecules on the cell surface. The chain is Paired immunoglobulin-like type 2 receptor beta (PILRB) from Homo sapiens (Human).